The chain runs to 398 residues: S-adenosylmethionine synthase (398 aa).

His26 is a binding site for ATP. Residue Asp28 participates in Mg(2+) binding. A K(+)-binding site is contributed by Glu54. L-methionine-binding residues include Glu67 and Gln110. The segment at 110–120 (QSPDIAQGVNE) is flexible loop. ATP-binding positions include 177–179 (DAK), 243–244 (RF), Asp252, 258–259 (RK), Ala275, and Lys279. Residue Asp252 participates in L-methionine binding. L-methionine is bound at residue Lys283.

Belongs to the AdoMet synthase family. As to quaternary structure, homotetramer; dimer of dimers. The cofactor is Mg(2+). K(+) is required as a cofactor.

It is found in the cytoplasm. It catalyses the reaction L-methionine + ATP + H2O = S-adenosyl-L-methionine + phosphate + diphosphate. It participates in amino-acid biosynthesis; S-adenosyl-L-methionine biosynthesis; S-adenosyl-L-methionine from L-methionine: step 1/1. Functionally, catalyzes the formation of S-adenosylmethionine (AdoMet) from methionine and ATP. The overall synthetic reaction is composed of two sequential steps, AdoMet formation and the subsequent tripolyphosphate hydrolysis which occurs prior to release of AdoMet from the enzyme. In Desulfotalea psychrophila (strain LSv54 / DSM 12343), this protein is S-adenosylmethionine synthase.